A 283-amino-acid polypeptide reads, in one-letter code: Nicotine 6-hydroxylase medium subunit (283 aa).

Residues 1–176 (MKLPAIRYAS…TDVWIPSRPN (176 aa)) form the FAD-binding PCMH-type domain. Residues 31-35 (AGGQS) and 110-114 (TLGGS) each bind FAD.

Heterotrimer composed of a large subunit (NdhL), a medium subunit (NdhM) and a small subunit (NdhS). It depends on FAD as a cofactor.

It localises to the cytoplasm. The catalysed reaction is (R)-nicotine + A + H2O = (R)-6-hydroxynicotine + AH2. It catalyses the reaction (S)-nicotine + A + H2O = (S)-6-hydroxynicotine + AH2. The protein operates within alkaloid degradation; nicotine degradation; 6-hydroxypseudooxynicotine from nicotine (R-isomer route): step 1/2. It functions in the pathway alkaloid degradation; nicotine degradation; 6-hydroxypseudooxynicotine from nicotine (S-isomer route): step 1/2. Nicotine dehydrogenase activity is inhibited by tungsten. Its function is as follows. Component of the nicotine 6-hydroxylase, which is involved in the degradation of nicotine. Catalyzes the hydroxylation of the pyridine ring at C6 to form 6-hydroxynicotine. Can use both L-nicotine and D-nicotine. This chain is Nicotine 6-hydroxylase medium subunit, found in Paenarthrobacter nicotinovorans (Arthrobacter nicotinovorans).